A 402-amino-acid polypeptide reads, in one-letter code: Formate-dependent phosphoribosylglycinamide formyltransferase (402 aa).

Residues 25-26 (EL) and glutamate 85 contribute to the N(1)-(5-phospho-beta-D-ribosyl)glycinamide site. ATP contacts are provided by residues arginine 118, lysine 159, 164–169 (SSGKGQ), 199–202 (EQFV), and glutamate 207. The 196-residue stretch at 123 to 318 (RLASEELGLP…EFELHAKAVL (196 aa)) folds into the ATP-grasp domain. The Mg(2+) site is built by glutamate 277 and glutamate 289. N(1)-(5-phospho-beta-D-ribosyl)glycinamide contacts are provided by residues aspartate 296, lysine 365, and 372-373 (RR).

Belongs to the PurK/PurT family. In terms of assembly, homodimer.

It catalyses the reaction N(1)-(5-phospho-beta-D-ribosyl)glycinamide + formate + ATP = N(2)-formyl-N(1)-(5-phospho-beta-D-ribosyl)glycinamide + ADP + phosphate + H(+). Its pathway is purine metabolism; IMP biosynthesis via de novo pathway; N(2)-formyl-N(1)-(5-phospho-D-ribosyl)glycinamide from N(1)-(5-phospho-D-ribosyl)glycinamide (formate route): step 1/1. Involved in the de novo purine biosynthesis. Catalyzes the transfer of formate to 5-phospho-ribosyl-glycinamide (GAR), producing 5-phospho-ribosyl-N-formylglycinamide (FGAR). Formate is provided by PurU via hydrolysis of 10-formyl-tetrahydrofolate. In Corynebacterium efficiens (strain DSM 44549 / YS-314 / AJ 12310 / JCM 11189 / NBRC 100395), this protein is Formate-dependent phosphoribosylglycinamide formyltransferase.